The sequence spans 80 residues: Putative defensin-like protein 23 (80 aa).

Residues 1-25 form the signal peptide; it reads MTTTMKIMSFAMLLVLLFSIDVVEG. Cystine bridges form between C31–C80, C41–C66, C50–C76, and C54–C78.

The protein belongs to the DEFL family.

Its subcellular location is the secreted. The polypeptide is Putative defensin-like protein 23 (Arabidopsis thaliana (Mouse-ear cress)).